Consider the following 426-residue polypeptide: Trigger factor (426 aa).

In terms of domain architecture, PPIase FKBP-type spans 165–239 (GDVYKLNEAG…ISEIKRLELP (75 aa)).

This sequence belongs to the FKBP-type PPIase family. Tig subfamily.

It localises to the cytoplasm. It carries out the reaction [protein]-peptidylproline (omega=180) = [protein]-peptidylproline (omega=0). Involved in protein export. Acts as a chaperone by maintaining the newly synthesized protein in an open conformation. Functions as a peptidyl-prolyl cis-trans isomerase. This chain is Trigger factor, found in Pelodictyon phaeoclathratiforme (strain DSM 5477 / BU-1).